The following is a 666-amino-acid chain: MEGFMDSGTQTDAVVVLSLAQAAVLGLVSENELFGATISAEAFYPDLGPELTGTAMGEPGPPGPDIYQLACNGRALEEPPEEEVLEVEAAFEKHTRRKTRPPVRLVPKVKFEKAEEEEEQEVYEVSVPGDDKDPGPAEAPAEVASSGCEALVQSSAVKMIDLSAFSRKPRTLRHLPRTPRPELDMAPFDPPFPDPARDGFPEPSMALPGPETLPTECSFEPPHLAPLSNPEPPNMTSTTELVKPEQGFVWQESSEFEADTAGSTVERHKKAQLDRLDINVQIDDSYLVEAGDRQKRWQCRMCEKSYTSKYNLVTHILGHNGIKPHSCPHCSKLFKQPSHLQTHLLTHQGTRPHKCQVCHKAFTQTSHLKRHMLLHSEVKPYSCHFCGRGFAYPSELKAHEVKHESGRCHVCVECGLDFSTLTQLKRHLASHQGPTLYQCLECDKSFHYRSQLQNHMLKHQNVRPFVCTECGMEFSQIHHLKQHSLTHKGVKEFKCEVCGREFTLQANMKRHMLIHTSVRPYQCHICFKTFVQKQTLKTHMIVHSPVKPFKCKVCGKSFNRMYNLLGHMHLHAGSKPFKCPYCSSKFNLKGNLSRHMKVKHGVMDISLDSQDPMMELAGPDPSELDNHQEMEDFEENAYTYSSVDSSAEASTLTEQAMKEMAYYNVL.

Glycyl lysine isopeptide (Lys-Gly) (interchain with G-Cter in SUMO2) cross-links involve residues K110 and K113. Positions 113-141 are disordered; that stretch reads KAEEEEEQEVYEVSVPGDDKDPGPAEAPA. C2H2-type zinc fingers lie at residues 297–319, 325–347, and 353–375; these read WQCRMCEKSYTSKYNLVTHILGH, HSCPHCSKLFKQPSHLQTHLLTH, and HKCQVCHKAFTQTSHLKRHMLLH. K379 is covalently cross-linked (Glycyl lysine isopeptide (Lys-Gly) (interchain with G-Cter in SUMO2)). 8 C2H2-type zinc fingers span residues 381-403, 409-431, 437-459, 465-487, 493-515, 521-543, 549-571, and 577-600; these read YSCHFCGRGFAYPSELKAHEVKH, HVCVECGLDFSTLTQLKRHLASH, YQCLECDKSFHYRSQLQNHMLKH, FVCTECGMEFSQIHHLKQHSLTH, FKCEVCGREFTLQANMKRHMLIH, YQCHICFKTFVQKQTLKTHMIVH, FKCKVCGKSFNRMYNLLGHMHLH, and FKCPYCSSKFNLKGNLSRHMKVKH.

It belongs to the krueppel C2H2-type zinc-finger protein family.

It is found in the nucleus. Functionally, may be involved in transcriptional regulation. The protein is Zinc finger protein 710 (Znf710) of Mus musculus (Mouse).